The primary structure comprises 496 residues: Autophagy-related protein 21 (496 aa).

Residues 41-86 (SKKKTSNNNGSASNSESRNNEESILITNGSRDRTDAEEEEDNEDNA) are disordered. Over residues 46 to 57 (SNNNGSASNSES) the composition is skewed to low complexity. Over residues 75 to 84 (DAEEEEDNED) the composition is skewed to acidic residues. Threonine 213 is modified (phosphothreonine). The residue at position 237 (serine 237) is a Phosphoserine. WD repeat units lie at residues 294–334 (VHKG…DYMS), 346–385 (TRLCNLYQLAFDKSMTMIGCVGDTDTIHLFKLDDASNSLP), and 448–488 (VNES…GECV). The L/FRRG motif signature appears at 342–346 (FRRGT).

It belongs to the WD repeat PROPPIN family.

The protein localises to the cytoplasm. The protein resides in the vacuole. Functionally, required for cytoplasm to vacuole transport (Cvt) vesicles formation and mitophagy. Involved in binding of phosphatidylethanolamine to ATG8 and in recruitment of ATG8 and ATG5 to the pre-autophagosomal structure. Protects ATG8 from ARG4-mediated cleavage. Essential for maturation of proaminopeptidase I. This chain is Autophagy-related protein 21 (ATG21), found in Saccharomyces cerevisiae (strain ATCC 204508 / S288c) (Baker's yeast).